The primary structure comprises 153 residues: NAD(P)H-quinone oxidoreductase subunit N (153 aa).

It belongs to the complex I NdhN subunit family. In terms of assembly, NDH-1 can be composed of about 15 different subunits; different subcomplexes with different compositions have been identified which probably have different functions.

It localises to the cellular thylakoid membrane. The catalysed reaction is a plastoquinone + NADH + (n+1) H(+)(in) = a plastoquinol + NAD(+) + n H(+)(out). It carries out the reaction a plastoquinone + NADPH + (n+1) H(+)(in) = a plastoquinol + NADP(+) + n H(+)(out). Its function is as follows. NDH-1 shuttles electrons from an unknown electron donor, via FMN and iron-sulfur (Fe-S) centers, to quinones in the respiratory and/or the photosynthetic chain. The immediate electron acceptor for the enzyme in this species is believed to be plastoquinone. Couples the redox reaction to proton translocation, and thus conserves the redox energy in a proton gradient. Cyanobacterial NDH-1 also plays a role in inorganic carbon-concentration. This chain is NAD(P)H-quinone oxidoreductase subunit N, found in Synechococcus sp. (strain CC9311).